A 416-amino-acid chain; its full sequence is Keratin, type I cuticular Ha1 (416 aa).

Residues 1–56 (MPYNFCLPSLSCRTSCSSRPCVPPSCHSCTLPGACNIPANVSNCNWFCEGSFNGSE) form a head region. The region spanning 56 to 367 (EKETMQFLND…SLLESEDCNL (312 aa)) is the IF rod domain. The coil 1A stretch occupies residues 57-91 (KETMQFLNDRLASYLEKVRQLERDNAELENLIRER). A linker 1 region spans residues 92–102 (SQQQEPLLCPS). Residues 103 to 203 (YQSYFKTIEE…HEQEVNTLRC (101 aa)) form a coil 1B region. The tract at residues 204-219 (QLGDRLNVEVDAAPTV) is linker 12. The segment at 220–363 (DLNRVLNETR…NTYRSLLESE (144 aa)) is coil 2. Positions 364 to 416 (DCNLPSNPCATTNACSKPIGPCLSNPCTPCVPPAPCTPCAPRPRCGPCNSFVR) are tail.

It belongs to the intermediate filament family.

The protein is Keratin, type I cuticular Ha1 (KRT31) of Pan troglodytes (Chimpanzee).